The following is a 93-amino-acid chain: Small ribosomal subunit protein bS6 (93 aa).

Belongs to the bacterial ribosomal protein bS6 family.

Functionally, binds together with bS18 to 16S ribosomal RNA. The sequence is that of Small ribosomal subunit protein bS6 from Phytoplasma australiense.